A 216-amino-acid chain; its full sequence is Pyridoxine/pyridoxamine 5'-phosphate oxidase (216 aa).

Residues 9–12 (RLSY) and R67 each bind substrate. FMN-binding positions include 62–67 (RIVLLR), 77–78 (YT), K84, and Q106. Positions 124, 128, and 132 each coordinate substrate. FMN-binding positions include 142-143 (QS) and W188. Substrate is bound at residue 194–196 (RMH). Residue R198 coordinates FMN.

It belongs to the pyridoxamine 5'-phosphate oxidase family. As to quaternary structure, homodimer. It depends on FMN as a cofactor.

The catalysed reaction is pyridoxamine 5'-phosphate + O2 + H2O = pyridoxal 5'-phosphate + H2O2 + NH4(+). The enzyme catalyses pyridoxine 5'-phosphate + O2 = pyridoxal 5'-phosphate + H2O2. The protein operates within cofactor metabolism; pyridoxal 5'-phosphate salvage; pyridoxal 5'-phosphate from pyridoxamine 5'-phosphate: step 1/1. It participates in cofactor metabolism; pyridoxal 5'-phosphate salvage; pyridoxal 5'-phosphate from pyridoxine 5'-phosphate: step 1/1. Its function is as follows. Catalyzes the oxidation of either pyridoxine 5'-phosphate (PNP) or pyridoxamine 5'-phosphate (PMP) into pyridoxal 5'-phosphate (PLP). This Psychrobacter cryohalolentis (strain ATCC BAA-1226 / DSM 17306 / VKM B-2378 / K5) protein is Pyridoxine/pyridoxamine 5'-phosphate oxidase.